A 213-amino-acid polypeptide reads, in one-letter code: High frequency lysogenization protein HflD homolog (213 aa).

The stretch at 79–122 forms a coiled coil; the sequence is QGLNAELTRYTLSLMVLERKLSSAKGALNTLGDRINGLQRQLDH.

This sequence belongs to the HflD family.

Its subcellular location is the cytoplasm. It is found in the cell inner membrane. The protein is High frequency lysogenization protein HflD homolog of Salmonella typhi.